The sequence spans 360 residues: Peptide chain release factor 1 (360 aa).

Q235 carries the post-translational modification N5-methylglutamine.

It belongs to the prokaryotic/mitochondrial release factor family. Methylated by PrmC. Methylation increases the termination efficiency of RF1.

Its subcellular location is the cytoplasm. Peptide chain release factor 1 directs the termination of translation in response to the peptide chain termination codons UAG and UAA. The protein is Peptide chain release factor 1 of Dechloromonas aromatica (strain RCB).